Here is a 338-residue protein sequence, read N- to C-terminus: Secretory carrier-associated membrane protein 1 (338 aa).

The tract at residues 1-64 (MSDFDSNPFA…NVPNTQPAIM (64 aa)) is disordered. S2 is subject to N-acetylserine. The residue at position 2 (S2) is a Phosphoserine. The Cytoplasmic portion of the chain corresponds to 2–155 (SDFDSNPFAD…QKTVKLMYYL (154 aa)). Residue T45 is modified to Phosphothreonine. Residues 156 to 176 (WMFHAVTLFLNIFGCLAWFCV) form a helical membrane-spanning segment. Residues 177–181 (DSSRA) are Lumenal-facing. The chain crosses the membrane as a helical span at residues 182 to 202 (VDFGLSILWFLLFTPCSFVCW). Over 203 to 218 (YRPLYGAFRSDSSFRF) the chain is Cytoplasmic. The chain crosses the membrane as a helical span at residues 219-239 (FVFFFVYICQFAVHVLQAAGF). Over 240–261 (HNWGNCGWISSLTGLNKNIPVG) the chain is Lumenal. A helical membrane pass occupies residues 262–282 (IMMIIIAALFTASAVISLVMF). The Cytoplasmic segment spans residues 283–338 (KKVHGLYRTTGASFEKAQQEFATGVMSNKTVQTAAANAASTAATSAAQNAFKGNQM).

Belongs to the SCAMP family. In terms of assembly, interacts with SYNRG, ITSN1 and SLC9A7.

It is found in the golgi apparatus. It localises to the trans-Golgi network membrane. Its subcellular location is the recycling endosome membrane. In terms of biological role, functions in post-Golgi recycling pathways. Acts as a recycling carrier to the cell surface. The sequence is that of Secretory carrier-associated membrane protein 1 (Scamp1) from Mus musculus (Mouse).